The sequence spans 274 residues: Large ribosomal subunit protein uL2cz/uL2cy (274 aa).

Disordered stretches follow at residues 1–21 (MAIHLYKTSTPSTRNGAVDSQ) and 225–254 (PVDHPHGGGEGRAPIGRKKPVTPWGYPALG).

The protein belongs to the universal ribosomal protein uL2 family. Part of the 50S ribosomal subunit.

Its subcellular location is the plastid. It localises to the chloroplast. The polypeptide is Large ribosomal subunit protein uL2cz/uL2cy (rpl2-A) (Draba nemorosa (Woodland whitlowgrass)).